The sequence spans 120 residues: MERHQHLLSEYQQILTLSEQMLVLATEGNWDALVDLEMTYLKAVESTANITISSCSSLMLQDLLREKLRAILDNEIEIKRLLQLRLDRLSDLVGQSTKQQAVNNTYGQFPDHALLLGETQ.

Positions 1-50 (MERHQHLLSEYQQILTLSEQMLVLATEGNWDALVDLEMTYLKAVESTANI) are required for homodimerization. The segment at 60–98 (LQDLLREKLRAILDNEIEIKRLLQLRLDRLSDLVGQSTK) is fliD binding.

Belongs to the FliT family. Homodimer. Interacts with FliD and FlhC.

The protein resides in the cytoplasm. It localises to the cytosol. In terms of biological role, dual-function protein that regulates the transcription of class 2 flagellar operons and that also acts as an export chaperone for the filament-capping protein FliD. As a transcriptional regulator, acts as an anti-FlhDC factor; it directly binds FlhC, thus inhibiting the binding of the FlhC/FlhD complex to class 2 promoters, resulting in decreased expression of class 2 flagellar operons. As a chaperone, effects FliD transition to the membrane by preventing its premature polymerization, and by directing it to the export apparatus. The sequence is that of Flagellar protein FliT from Yersinia enterocolitica serotype O:8 / biotype 1B (strain NCTC 13174 / 8081).